Here is a 433-residue protein sequence, read N- to C-terminus: Enolase (433 aa).

Gln166 provides a ligand contact to (2R)-2-phosphoglycerate. Residue Glu208 is the Proton donor of the active site. Residues Asp245, Glu289, and Asp316 each contribute to the Mg(2+) site. Lys341, Arg370, Ser371, and Lys392 together coordinate (2R)-2-phosphoglycerate. Lys341 (proton acceptor) is an active-site residue.

The protein belongs to the enolase family. The cofactor is Mg(2+).

It localises to the cytoplasm. The protein localises to the secreted. The protein resides in the cell surface. It carries out the reaction (2R)-2-phosphoglycerate = phosphoenolpyruvate + H2O. It functions in the pathway carbohydrate degradation; glycolysis; pyruvate from D-glyceraldehyde 3-phosphate: step 4/5. In terms of biological role, catalyzes the reversible conversion of 2-phosphoglycerate (2-PG) into phosphoenolpyruvate (PEP). It is essential for the degradation of carbohydrates via glycolysis. In Acetivibrio thermocellus (strain ATCC 27405 / DSM 1237 / JCM 9322 / NBRC 103400 / NCIMB 10682 / NRRL B-4536 / VPI 7372) (Clostridium thermocellum), this protein is Enolase.